Consider the following 213-residue polypeptide: Dimethylamine corrinoid protein 1 (213 aa).

Residues 1–90 enclose the B12-binding N-terminal domain; sequence MSKEELLQEL…LMPEGSASSK (90 aa). The 123-residue stretch at 91-213 folds into the B12-binding domain; it reads MGVIVNGTVE…AVAKAKELLA (123 aa). Position 104 (His104) interacts with methylcob(III)alamin.

It belongs to the methylamine corrinoid protein family.

The protein operates within one-carbon metabolism; methanogenesis from dimethylamine. Acts as a methyl group carrier between MtbB and MtbA. This Methanosarcina acetivorans (strain ATCC 35395 / DSM 2834 / JCM 12185 / C2A) protein is Dimethylamine corrinoid protein 1 (mtbC1).